The chain runs to 89 residues: Elongation factor 1-beta (89 aa).

It belongs to the EF-1-beta/EF-1-delta family.

Its function is as follows. Promotes the exchange of GDP for GTP in EF-1-alpha/GDP, thus allowing the regeneration of EF-1-alpha/GTP that could then be used to form the ternary complex EF-1-alpha/GTP/AAtRNA. The protein is Elongation factor 1-beta of Methanococcoides burtonii (strain DSM 6242 / NBRC 107633 / OCM 468 / ACE-M).